A 243-amino-acid polypeptide reads, in one-letter code: Small ribosomal subunit protein mS23 (243 aa).

Belongs to the mitochondrion-specific ribosomal protein mS23 family. Component of the mitochondrial small ribosomal subunit.

The protein localises to the mitochondrion. The chain is Small ribosomal subunit protein mS23 (rsm25) from Emericella nidulans (strain FGSC A4 / ATCC 38163 / CBS 112.46 / NRRL 194 / M139) (Aspergillus nidulans).